The primary structure comprises 508 residues: DEAD-box ATP-dependent RNA helicase 8 (508 aa).

The disordered stretch occupies residues 1 to 123; that stretch reads MDPRARYPPG…LKLPPQDTRY (123 aa). Over residues 18-53 the composition is skewed to low complexity; it reads NPNYYNRGPPLQQQHNHHQQQQTSAPHHQQYVQRQP. Basic residues predominate over residues 54-64; the sequence is QQHHHHNHHQQ. The Q motif signature appears at 134 to 162; that stretch reads NEFEDYFLKRELLMGIYEKGFERPSPIQE. In terms of domain architecture, Helicase ATP-binding spans 165 to 335; sequence IPIALTGSDI…DKYLPKPYVI (171 aa). An ATP-binding site is contributed by 178–185; it reads AKNGTGKT. Positions 283-286 match the DEAD box motif; the sequence is DEAD. A Helicase C-terminal domain is found at 345 to 505; sequence GITQFYAFVE…PIPPQIDQAI (161 aa).

Belongs to the DEAD box helicase family. DDX6/DHH1 subfamily.

The protein localises to the cytoplasm. It is found in the P-body. It carries out the reaction ATP + H2O = ADP + phosphate + H(+). Functionally, ATP-dependent RNA helicase involved in mRNA turnover, and more specifically in mRNA decapping. The polypeptide is DEAD-box ATP-dependent RNA helicase 8 (Oryza sativa subsp. japonica (Rice)).